Reading from the N-terminus, the 160-residue chain is MTSADRRRDAVARIIRARRIGTQEELLAALERAGFRATQATLSRDLARLGARRVSGPEGAVYELGADGADGGLAALRGLVSSIAANASMVVIRTHPGSAPAIARAIDLAQPPEVLGTIAGDDTIFVAPAGELRPRRLAARLAELLGTPSALAGEGGERTH.

It belongs to the ArgR family.

It localises to the cytoplasm. It functions in the pathway amino-acid biosynthesis; L-arginine biosynthesis [regulation]. Functionally, regulates arginine biosynthesis genes. The polypeptide is Arginine repressor (Anaeromyxobacter dehalogenans (strain 2CP-1 / ATCC BAA-258)).